The following is a 154-amino-acid chain: Interleukin-2 (154 aa).

Positions 1 to 20 (MYRMQLLSCIALSLALVTNS) are cleaved as a signal peptide. A glycan (O-linked (GalNAc...) threonine) is linked at threonine 23. A disulfide bond links cysteine 78 and cysteine 126.

The protein belongs to the IL-2 family.

Its subcellular location is the secreted. In terms of biological role, cytokine produced by activated CD4-positive helper T-cells and to a lesser extend activated CD8-positive T-cells and natural killer (NK) cells that plays pivotal roles in the immune response and tolerance. Binds to a receptor complex composed of either the high-affinity trimeric IL-2R (IL2RA/CD25, IL2RB/CD122 and IL2RG/CD132) or the low-affinity dimeric IL-2R (IL2RB and IL2RG). Interaction with the receptor leads to oligomerization and conformation changes in the IL-2R subunits resulting in downstream signaling starting with phosphorylation of JAK1 and JAK3. In turn, JAK1 and JAK3 phosphorylate the receptor to form a docking site leading to the phosphorylation of several substrates including STAT5. This process leads to activation of several pathways including STAT, phosphoinositide-3-kinase/PI3K and mitogen-activated protein kinase/MAPK pathways. Functions as a T-cell growth factor and can increase NK-cell cytolytic activity as well. Promotes strong proliferation of activated B-cells and subsequently immunoglobulin production. Plays a pivotal role in regulating the adaptive immune system by controlling the survival and proliferation of regulatory T-cells, which are required for the maintenance of immune tolerance. Moreover, participates in the differentiation and homeostasis of effector T-cell subsets, including Th1, Th2, Th17 as well as memory CD8-positive T-cells. In Macaca fascicularis (Crab-eating macaque), this protein is Interleukin-2 (IL2).